A 156-amino-acid polypeptide reads, in one-letter code: Protein-export protein SecB (156 aa).

This sequence belongs to the SecB family. As to quaternary structure, homotetramer, a dimer of dimers. One homotetramer interacts with 1 SecA dimer.

Its subcellular location is the cytoplasm. One of the proteins required for the normal export of preproteins out of the cell cytoplasm. It is a molecular chaperone that binds to a subset of precursor proteins, maintaining them in a translocation-competent state. It also specifically binds to its receptor SecA. The chain is Protein-export protein SecB from Xanthobacter autotrophicus (strain ATCC BAA-1158 / Py2).